We begin with the raw amino-acid sequence, 518 residues long: Adenine deaminase (518 aa).

This sequence belongs to the metallo-dependent hydrolases superfamily. Adenine deaminase family. Mn(2+) serves as cofactor.

It catalyses the reaction adenine + H2O + H(+) = hypoxanthine + NH4(+). The polypeptide is Adenine deaminase (Methanoculleus marisnigri (strain ATCC 35101 / DSM 1498 / JR1)).